A 963-amino-acid polypeptide reads, in one-letter code: Putative RNA Helicase B962L (963 aa).

Positions 43 to 229 (IPTSLADRVL…FGIGKENIIL (187 aa)) constitute a Helicase ATP-binding domain. ATP is bound at residue 56-63 (SRTGSGKS). Residues 167–170 (DEAH) carry the DEAH box motif. Residues 253-459 (ACETALTIHK…TIKKNKEGVF (207 aa)) enclose the Helicase C-terminal domain. A helical membrane pass occupies residues 521–541 (GYFWQAAISDIAIILAVVSVV).

This sequence belongs to the DEAD box helicase family. DEAH subfamily.

It is found in the host membrane. The protein localises to the virion. It catalyses the reaction ATP + H2O = ADP + phosphate + H(+). The chain is Putative RNA Helicase B962L from African swine fever virus (isolate Tick/Malawi/Lil 20-1/1983) (ASFV).